The following is a 92-amino-acid chain: uncharacterized protein (92 aa).

This is an uncharacterized protein from Haemophilus influenzae (strain ATCC 51907 / DSM 11121 / KW20 / Rd).